A 647-amino-acid polypeptide reads, in one-letter code: Putative lipase YDL109C (647 aa).

Ser-274 (charge relay system) is an active-site residue. A disordered region spans residues 502 to 523; that stretch reads PPPSPTLYEGTAAKEGETRKTR. The segment covering 513–523 has biased composition (basic and acidic residues); that stretch reads AAKEGETRKTR.

It belongs to the putative lipase ROG1 family.

In terms of biological role, involved in lipid metabolism. The protein is Putative lipase YDL109C of Saccharomyces cerevisiae (strain ATCC 204508 / S288c) (Baker's yeast).